Reading from the N-terminus, the 368-residue chain is 3-dehydroquinate synthase (368 aa).

NAD(+)-binding positions include 71-76, 105-109, 129-130, K142, K151, and 169-172; these read DGEAFK, GVVGD, TT, and TLRT. 3 residues coordinate Zn(2+): E184, H247, and H264.

The protein belongs to the sugar phosphate cyclases superfamily. Dehydroquinate synthase family. Co(2+) is required as a cofactor. Requires Zn(2+) as cofactor. NAD(+) serves as cofactor.

Its subcellular location is the cytoplasm. It catalyses the reaction 7-phospho-2-dehydro-3-deoxy-D-arabino-heptonate = 3-dehydroquinate + phosphate. The protein operates within metabolic intermediate biosynthesis; chorismate biosynthesis; chorismate from D-erythrose 4-phosphate and phosphoenolpyruvate: step 2/7. Its function is as follows. Catalyzes the conversion of 3-deoxy-D-arabino-heptulosonate 7-phosphate (DAHP) to dehydroquinate (DHQ). The protein is 3-dehydroquinate synthase of Cupriavidus necator (strain ATCC 17699 / DSM 428 / KCTC 22496 / NCIMB 10442 / H16 / Stanier 337) (Ralstonia eutropha).